The sequence spans 615 residues: Filament-like plant protein 3 (615 aa).

Positions 1-18 (MDRRSWLWRRKSSEKSPG) are enriched in basic and acidic residues. The tract at residues 1-55 (MDRRSWLWRRKSSEKSPGETESTGSVSSHSERFSDDQRSQSPELNSKPVTREEEA) is disordered. The span at 19–28 (ETESTGSVSS) shows a compositional bias: polar residues. Positions 29–38 (HSERFSDDQR) are enriched in basic and acidic residues. The span at 39–48 (SQSPELNSKP) shows a compositional bias: polar residues. Coiled-coil stretches lie at residues 87–121 (AEEAVSGWEKAENEAAALKQQLDASTSKVSALEDR) and 148–211 (EEAI…KSEE). 2 disordered regions span residues 258–289 (DNSSDLKSSIDNQSDYSGRVSFSDNEMQSPSE) and 319–343 (PHSEPGRKHSESNKELEKSNAHVNQ). A compositionally biased stretch (polar residues) spans 262 to 288 (DLKSSIDNQSDYSGRVSFSDNEMQSPS). Residues 322–343 (EPGRKHSESNKELEKSNAHVNQ) are compositionally biased toward basic and acidic residues. Residues 327 to 563 (HSESNKELEK…KQELEHHQET (237 aa)) are a coiled coil.

It belongs to the FPP family. Interacts with WPP/MAF proteins. Binds to COG2; this interaction promotes the association between cortical microtubules and EXO70A1. Accumulates in preferentially xylem cells.

It is found in the vesicle. Its function is as follows. Ensures, when in complex with COG2 and FPP2/VETH2, the correct secondary cell wall (SCW) deposition pattern by recruiting exocyst components to cortical microtubules in xylem cells during secondary cell wall deposition by recruiting EXO70A1. The protein is Filament-like plant protein 3 of Arabidopsis thaliana (Mouse-ear cress).